The chain runs to 2002 residues: [F-actin]-monooxygenase MICAL3 (2002 aa).

A monooxygenase domain region spans residues 2 to 494 (EERKHETMNP…RHLYDTGETK (493 aa)). FAD-binding positions include cysteine 97, 116 to 118 (EKR), 123 to 125 (RNN), phenylalanine 183, tyrosine 298, and aspartate 398. One can recognise a Calponin-homology (CH) domain in the interval 518-624 (VARSSKLLGW…YLTQFYEMFK (107 aa)). Serine 649 carries the phosphoserine modification. Residues 658–706 (GQTISRKRSPKDKKEKDLDGAGKRRKTSQSEEEEAPRGHRGERPTLVST) form a disordered region. The Nuclear localization signal motif lies at 663–684 (RKRSPKDKKEKDLDGAGKRRKT). The segment covering 669 to 679 (DKKEKDLDGAG) has biased composition (basic and acidic residues). Residues serine 685 and serine 687 each carry the phosphoserine modification. The LIM zinc-binding domain maps to 762-824 (DTCYFCQKRV…KPHYCYRLSG (63 aa)). Positions 764, 767, 785, 788, 791, 794, 814, and 817 each coordinate Zn(2+). The interval 835–883 (PLSGKEAKGPLQDGATTDANGRANAVASSTERTPGSGVNGLEEPSIAKR) is disordered. Position 887 is a phosphothreonine (threonine 887). 3 disordered regions span residues 907 to 1313 (QEVP…SPLA), 1335 to 1776 (RRSL…GKHR), and 1791 to 1821 (LSFS…TYTE). Acidic residues predominate over residues 938 to 950 (SEMEEEGEEEEEE). Serine 977 carries the post-translational modification Phosphoserine. Acidic residues predominate over residues 991 to 1017 (NEEEEEEEEEYEEEEEEDYDEEEEESS). The segment covering 1041-1054 (HWTHIREREEEERM) has biased composition (basic and acidic residues). Residues 1055–1066 (APASESSASGAP) show a composition bias toward low complexity. The segment covering 1068–1102 (DENDLEEDVDSEPAEIEGEAAEDGDPGDTGAELDD) has biased composition (acidic residues). 4 positions are modified to phosphoserine: serine 1134, serine 1143, serine 1160, and serine 1192. The span at 1150 to 1163 (GPSQATSPIRSPQE) shows a compositional bias: polar residues. Residues 1191–1218 (KSPEERLFPEPLLPKEKPKADAPSDLKA) show a composition bias toward basic and acidic residues. The span at 1239–1258 (PGSPQPQPPVAASTPPPSPL) shows a compositional bias: pro residues. Polar residues-rich tracts occupy residues 1268–1280 (TEAT…QSPI) and 1288–1302 (KTST…QSQS). Serine 1274 carries the phosphoserine modification. A Phosphothreonine modification is found at threonine 1276. A Phosphoserine modification is found at serine 1278. A phosphoserine mark is found at serine 1310 and serine 1337. Residue threonine 1341 is modified to Phosphothreonine. Phosphoserine occurs at positions 1371 and 1384. A compositionally biased stretch (basic and acidic residues) spans 1407–1422 (PSDRELRSAQEERREL). Over residues 1423–1435 (SSSSGLGLHGSSS) the composition is skewed to low complexity. Serine 1433 is subject to Phosphoserine. The span at 1436–1451 (NMKTLGSQSFNTSDSA) shows a compositional bias: polar residues. The residue at position 1454 (threonine 1454) is a Phosphothreonine. Positions 1456–1467 (PSSPPPPPPPGE) are enriched in pro residues. A compositionally biased stretch (acidic residues) spans 1516-1530 (SVEEIPFADDVEDTY). Positions 1588 to 1604 (EAKELAEERMRAREKSV) are enriched in basic and acidic residues. At serine 1649 the chain carries Phosphoserine. A Phosphothreonine modification is found at threonine 1651. Residues 1657–1668 (GSEEPTLKHEAT) show a composition bias toward basic and acidic residues. Over residues 1674-1694 (SPPSDSGGPDGSFTSSEGSSG) the composition is skewed to low complexity. Basic residues predominate over residues 1695-1713 (KSKKRSSLFSPRRNKKEKK). Residues serine 1701 and serine 1704 each carry the phosphoserine modification. Positions 1760 to 1769 (CPSTPSSGAT) are enriched in polar residues. Residues 1804–1820 (VLEKSSQKSRREPRTYT) show a composition bias toward basic and acidic residues. A coiled-coil region spans residues 1821–1992 (EEELNAKLTR…EEDKDLEAAM (172 aa)). In terms of domain architecture, bMERB spans 1841 to 1990 (KQEELKRLHR…EREEDKDLEA (150 aa)). The residue at position 1912 (serine 1912) is a Phosphoserine.

The protein belongs to the Mical family. Interacts with RAB1B, RAB8A, RAB10, RAB13 and RAB15 (in their GTP-bound forms); binding to RAB1B is of low affinity compared to other Rab proteins; at least in case of RAB8A can bind 2 molecules of RAB8A simultaneously through a high and a low affinity binding site, respectively. Interacts with ERC1 and RAB8A; may bridge ERC1 with RAB8A. Interacts with KIF23 and ERC1; enhances the interaction between KIF23 and ERC1. Interacts with NINL isoform 2. Requires FAD as cofactor. Ubiquitous.

It is found in the cytoplasm. The protein resides in the cell cortex. The protein localises to the cytoskeleton. Its subcellular location is the nucleus. It localises to the midbody. It is found in the spindle. The protein resides in the cilium basal body. The enzyme catalyses L-methionyl-[F-actin] + NADPH + O2 + H(+) = L-methionyl-(R)-S-oxide-[F-actin] + NADP(+) + H2O. In terms of biological role, monooxygenase that promotes depolymerization of F-actin by mediating oxidation of specific methionine residues on actin to form methionine-sulfoxide, resulting in actin filament disassembly and preventing repolymerization. In the absence of actin, it also functions as a NADPH oxidase producing H(2)O(2). Seems to act as Rab effector protein and plays a role in vesicle trafficking. Involved in exocytic vesicles tethering and fusion: the monooxygenase activity is required for this process and implicates RAB8A associated with exocytotic vesicles. Required for cytokinesis. Contributes to stabilization and/or maturation of the intercellular bridge independently of its monooxygenase activity. Promotes recruitment of Rab8 and ERC1 to the intercellular bridge, and together these proteins are proposed to function in timely abscission. In Homo sapiens (Human), this protein is [F-actin]-monooxygenase MICAL3 (MICAL3).